A 428-amino-acid polypeptide reads, in one-letter code: E3 ubiquitin-protein ligase RNF128 (428 aa).

Positions 1–38 (MGPPPGIGVYCRGGCGAARLLAWCFLLALSPHAPGSRG) are cleaved as a signal peptide. 3 N-linked (GlcNAc...) asparagine glycosylation sites follow: N48, N59, and N101. The region spanning 75-183 (SPLEPVSGVL…LKGTKILQSI (109 aa)) is the PA domain. Residues 208–228 (IFFVSVSFFIITAATVGYFIF) form a helical membrane-spanning segment. An RING-type; atypical zinc finger spans residues 277-318 (CAVCIELYKPNDLVRILTCNHIFHKTCVDPWLLEHRTCPMCK). Residues 342–351 (VSNEASNTAS) are compositionally biased toward polar residues. Residues 342–428 (VSNEASNTAS…QEAAVREIKS (87 aa)) are disordered.

In terms of processing, auto-ubiquitinated. Controls the development of T-cell clonal anergy by ubiquitination. In terms of tissue distribution, expressed in brain, kidney, heart, liver, ovary, testis and thymus. Expression increased as early as 4 hours by 5- to 7-fold in anergized cultures as compared to resting or activated cells.

The protein resides in the cytoplasm. Its subcellular location is the endomembrane system. It is found in the cytoskeleton. The protein localises to the perinuclear region. The catalysed reaction is S-ubiquitinyl-[E2 ubiquitin-conjugating enzyme]-L-cysteine + [acceptor protein]-L-lysine = [E2 ubiquitin-conjugating enzyme]-L-cysteine + N(6)-ubiquitinyl-[acceptor protein]-L-lysine.. The protein operates within protein modification; protein ubiquitination. E3 ubiquitin-protein ligase that catalyzes 'Lys-27', 'Lys-48'- or 'Lys-63'-linked polyubiquitin chains formation and plays a role in different biological processes such as modulation of immune response, cytoskeletal dynamics or protein homeostasis. Inhibits IL2 and IL4 transcription, thereby playing an important role in the induction of the anergic phenotype, a long-term stable state of T-lymphocyte unresponsiveness to antigenic stimulation associated with the blockade of interleukin production. Ubiquitinates ARPC5 with 'Lys-48' linkages and COR1A with 'Lys-63' linkages leading to their degradation, down-regulation of these cytoskeletal components results in impaired lamellipodium formation and reduced accumulation of F-actin at the immunological synapse. Functions in the patterning of the dorsal ectoderm; sensitizes ectoderm to respond to neural-inducing signals. Plays a positive role in innate immune response by promoting 'Lys-63'-linked ubiquitination of TBK1 after RNA- or DNA-virus infection. Regulates alveolar macrophage activation and neutrophil infiltration by interacting with TLR4, targeting it for degradation, and inhibiting NF-kappa-B activation, hence decreasing pro-inflammatory cytokines. Negatively regulates the IL-3/STAT5 signaling pathway by facilitating 'Lys-27'-linked polyubiquitination of IL3RA leading to its degradation via lysosomal pathway. Directly regulates the N-glycosylation process in the endoplasmic reticulum by targeting the glycosyl-transferase RPN1 for ubiquitination and degradation. Other substrates targeted for degradation by RNF128 include transmembrane proteins CD40L, CD83 or the tetraspanin CD151. The polypeptide is E3 ubiquitin-protein ligase RNF128 (Rnf128) (Mus musculus (Mouse)).